Here is an 80-residue protein sequence, read N- to C-terminus: MAINGRLLCLCLVLGLVFESLGHPSVQEKRAAEDSKPSGERRQTLTTKHEVDCGGIPCQFGCCENDKCRELDCEHYPGIP.

An N-terminal signal peptide occupies residues 1-21 (MAINGRLLCLCLVLGLVFESL). The propeptide occupies 22 to 42 (GHPSVQEKRAAEDSKPSGERR).

Belongs to the teretoxin M (TM) superfamily. In terms of processing, contains 3 disulfide bonds. In terms of tissue distribution, expressed by the venom duct.

Its subcellular location is the secreted. The polypeptide is Teretoxin Tsu6.5 (Terebra subulata (Chocolate spotted auger)).